The sequence spans 192 residues: Acetolactate synthase small subunit (192 aa).

The region spanning 29-103 (IITVKVRNEM…DTLKVSDLTD (75 aa)) is the ACT domain.

This sequence belongs to the acetolactate synthase small subunit family. Dimer of large and small chains.

The enzyme catalyses 2 pyruvate + H(+) = (2S)-2-acetolactate + CO2. Its pathway is amino-acid biosynthesis; L-isoleucine biosynthesis; L-isoleucine from 2-oxobutanoate: step 1/4. It participates in amino-acid biosynthesis; L-valine biosynthesis; L-valine from pyruvate: step 1/4. The protein is Acetolactate synthase small subunit (ilvH) of Aquifex aeolicus (strain VF5).